A 340-amino-acid chain; its full sequence is Glyceraldehyde-3-phosphate dehydrogenase (340 aa).

NAD(+)-binding positions include 12 to 13, Asp40, Lys85, and Ser128; that span reads RI. Residues 158-160, Thr189, Arg204, 217-218, and Arg240 each bind D-glyceraldehyde 3-phosphate; these read SCT and TG. The active-site Nucleophile is Cys159. Lys257 participates in a covalent cross-link: Isoglutamyl lysine isopeptide (Lys-Gln) (interchain with Q-Cter in protein Pup). Asn321 contacts NAD(+).

Belongs to the glyceraldehyde-3-phosphate dehydrogenase family. As to quaternary structure, homotetramer.

Its subcellular location is the cytoplasm. The catalysed reaction is D-glyceraldehyde 3-phosphate + phosphate + NAD(+) = (2R)-3-phospho-glyceroyl phosphate + NADH + H(+). It functions in the pathway carbohydrate degradation; glycolysis; pyruvate from D-glyceraldehyde 3-phosphate: step 1/5. Functionally, catalyzes the oxidative phosphorylation of glyceraldehyde 3-phosphate (G3P) to 1,3-bisphosphoglycerate (BPG) using the cofactor NAD. The first reaction step involves the formation of a hemiacetal intermediate between G3P and a cysteine residue, and this hemiacetal intermediate is then oxidized to a thioester, with concomitant reduction of NAD to NADH. The reduced NADH is then exchanged with the second NAD, and the thioester is attacked by a nucleophilic inorganic phosphate to produce BPG. The protein is Glyceraldehyde-3-phosphate dehydrogenase (gapA) of Mycolicibacterium smegmatis (strain ATCC 700084 / mc(2)155) (Mycobacterium smegmatis).